The chain runs to 132 residues: Large ribosomal subunit protein uL14 (132 aa).

This sequence belongs to the universal ribosomal protein uL14 family. In terms of assembly, part of the 50S ribosomal subunit. Forms a cluster with proteins L3 and L24e, part of which may contact the 16S rRNA in 2 intersubunit bridges.

Its function is as follows. Binds to 23S rRNA. Forms part of two intersubunit bridges in the 70S ribosome. This is Large ribosomal subunit protein uL14 from Methanocaldococcus jannaschii (strain ATCC 43067 / DSM 2661 / JAL-1 / JCM 10045 / NBRC 100440) (Methanococcus jannaschii).